The following is a 761-amino-acid chain: 5-methyltetrahydropteroyltriglutamate--homocysteine methyltransferase (761 aa).

5-methyltetrahydropteroyltri-L-glutamate is bound by residues 16-19 and lysine 116; that span reads RELK. Residues 437 to 439 and glutamate 490 each bind L-homocysteine; that span reads IGS. L-methionine is bound by residues 437–439 and glutamate 490; that span reads IGS. Residues 521 to 522 and tryptophan 567 each bind 5-methyltetrahydropteroyltri-L-glutamate; that span reads RC. Aspartate 605 lines the L-homocysteine pocket. Aspartate 605 serves as a coordination point for L-methionine. Glutamate 611 is a binding site for 5-methyltetrahydropteroyltri-L-glutamate. Zn(2+) contacts are provided by histidine 647, cysteine 649, and glutamate 671. Histidine 700 acts as the Proton donor in catalysis. Position 732 (cysteine 732) interacts with Zn(2+).

Belongs to the vitamin-B12 independent methionine synthase family. It depends on Zn(2+) as a cofactor.

The catalysed reaction is 5-methyltetrahydropteroyltri-L-glutamate + L-homocysteine = tetrahydropteroyltri-L-glutamate + L-methionine. It functions in the pathway amino-acid biosynthesis; L-methionine biosynthesis via de novo pathway; L-methionine from L-homocysteine (MetE route): step 1/1. In terms of biological role, catalyzes the transfer of a methyl group from 5-methyltetrahydrofolate to homocysteine resulting in methionine formation. The chain is 5-methyltetrahydropteroyltriglutamate--homocysteine methyltransferase from Chromohalobacter salexigens (strain ATCC BAA-138 / DSM 3043 / CIP 106854 / NCIMB 13768 / 1H11).